Reading from the N-terminus, the 148-residue chain is Ubiquitin-conjugating enzyme E2 8 (148 aa).

A UBC core domain is found at 1 to 147 (MASKRILKEL…ARNWTQKYAM (147 aa)). Cys85 functions as the Glycyl thioester intermediate in the catalytic mechanism.

It belongs to the ubiquitin-conjugating enzyme family. As to quaternary structure, interacts with CIP8, CHIP, NLA and XERICO. As to expression, highest expression in young stems, old leaves. Lowest levels in floral buds, anthers and young leaves.

The catalysed reaction is S-ubiquitinyl-[E1 ubiquitin-activating enzyme]-L-cysteine + [E2 ubiquitin-conjugating enzyme]-L-cysteine = [E1 ubiquitin-activating enzyme]-L-cysteine + S-ubiquitinyl-[E2 ubiquitin-conjugating enzyme]-L-cysteine.. The protein operates within protein modification; protein ubiquitination. Accepts the ubiquitin from the E1 complex and catalyzes its covalent attachment to other proteins. Mediates the selective degradation of short-lived and abnormal proteins. In Arabidopsis thaliana (Mouse-ear cress), this protein is Ubiquitin-conjugating enzyme E2 8 (UBC8).